Reading from the N-terminus, the 68-residue chain is conotoxin S11.3 (68 aa).

An N-terminal signal peptide occupies residues 1–26 (MMFRLTSVSCFLLVIVCLNLFQVVLT). 4 disulfide bridges follow: Cys29-Cys43, Cys36-Cys48, Cys42-Cys52, and Cys47-Cys56. Tyr60 carries the tyrosine amide modification. The propeptide occupies 64–68 (ATFQE).

The protein belongs to the conotoxin I2 superfamily. As to expression, expressed by the venom duct.

It is found in the secreted. The protein is conotoxin S11.3 of Conus striatus (Striated cone).